A 428-amino-acid polypeptide reads, in one-letter code: 5'-nucleotidase domain-containing protein 4 (428 aa).

The Nucleophile role is filled by Asp22. The Mg(2+) site is built by Asp22, Asp24, and Asp317. The active-site Proton donor is Asp24.

It belongs to the 5'(3')-deoxyribonucleotidase family.

The chain is 5'-nucleotidase domain-containing protein 4 (NT5DC4) from Homo sapiens (Human).